The following is a 196-amino-acid chain: Glutathione-specific gamma-glutamylcyclotransferase 1 (196 aa).

Residue 15 to 20 (IFGYGS) participates in substrate binding. Residue Glu95 is the Proton acceptor of the active site.

Belongs to the gamma-glutamylcyclotransferase family. ChaC subfamily.

The protein resides in the cytoplasm. Its subcellular location is the cytosol. It localises to the golgi apparatus. It is found in the trans-Golgi network. The catalysed reaction is glutathione = L-cysteinylglycine + 5-oxo-L-proline. Its function is as follows. Catalyzes the cleavage of glutathione into 5-oxo-L-proline and a Cys-Gly dipeptide. Acts specifically on glutathione, but not on other gamma-glutamyl peptides. Glutathione depletion is an important factor for apoptosis initiation and execution. Acts as a pro-apoptotic component of the unfolded protein response pathway by mediating the pro-apoptotic effects of the ATF4-ATF3-DDIT3/CHOP cascade. Negative regulator of Notch signaling pathway involved in embryonic neurogenesis: acts by inhibiting Notch cleavage by furin, maintaining Notch in an immature inactive form, thereby promoting neurogenesis in embryos. The polypeptide is Glutathione-specific gamma-glutamylcyclotransferase 1 (Danio rerio (Zebrafish)).